Here is a 390-residue protein sequence, read N- to C-terminus: Magnesium-protoporphyrin IX monomethyl ester [oxidative] cyclase (390 aa).

It belongs to the AcsF family. Fe cation serves as cofactor.

It catalyses the reaction Mg-protoporphyrin IX 13-monomethyl ester + 3 NADPH + 3 O2 + 2 H(+) = 3,8-divinyl protochlorophyllide a + 3 NADP(+) + 5 H2O. The protein operates within porphyrin-containing compound metabolism; chlorophyll biosynthesis (light-independent). Catalyzes the formation of the isocyclic ring in chlorophyll biosynthesis. Mediates the cyclase reaction, which results in the formation of divinylprotochlorophyllide (Pchlide) characteristic of all chlorophylls from magnesium-protoporphyrin IX 13-monomethyl ester (MgPMME). This chain is Magnesium-protoporphyrin IX monomethyl ester [oxidative] cyclase, found in Prochlorococcus marinus (strain MIT 9312).